The primary structure comprises 859 residues: Rod cGMP-specific 3',5'-cyclic phosphodiesterase subunit alpha (859 aa).

N-acetylglycine is present on G2. GAF domains lie at 73–222 (QAEK…NLIM) and 254–431 (DIER…GWSV). A PDEase domain is found at 483-816 (EEEELAEILQ…KEWKALADEY (334 aa)). H559 (proton donor) is an active-site residue. H563, H599, D600, and D720 together coordinate a divalent metal cation. Residues 823 to 859 (LEEEKQKQQAAKQAASGNQPGGNPLQGAPASKSCCIQ) are disordered. C856 is modified (cysteine methyl ester). Residue C856 is the site of S-farnesyl cysteine attachment. A propeptide spans 857–859 (CIQ) (removed in mature form).

This sequence belongs to the cyclic nucleotide phosphodiesterase family. Oligomer composed of two catalytic chains (alpha and beta), an inhibitory chain (gamma) and the delta chain. The cofactor is a divalent metal cation.

The protein localises to the cell membrane. Its subcellular location is the cell projection. It is found in the cilium. It localises to the photoreceptor outer segment. It carries out the reaction 3',5'-cyclic GMP + H2O = GMP + H(+). Its function is as follows. Rod-specific cGMP phosphodiesterase that catalyzes the hydrolysis of 3',5'-cyclic GMP. This protein participates in processes of transmission and amplification of the visual signal. The chain is Rod cGMP-specific 3',5'-cyclic phosphodiesterase subunit alpha from Mus musculus (Mouse).